The sequence spans 85 residues: Putative membrane protein insertion efficiency factor (85 aa).

Positions 62-85 (KGGFDPVPLKKDKSASKHSHKHNH) are disordered.

It belongs to the UPF0161 family.

It localises to the cell membrane. Functionally, could be involved in insertion of integral membrane proteins into the membrane. The polypeptide is Putative membrane protein insertion efficiency factor (Staphylococcus aureus (strain Mu3 / ATCC 700698)).